The primary structure comprises 465 residues: ATP synthase subunit beta (465 aa).

An ATP-binding site is contributed by 152-159 (GGAGVGKT).

This sequence belongs to the ATPase alpha/beta chains family. F-type ATPases have 2 components, CF(1) - the catalytic core - and CF(0) - the membrane proton channel. CF(1) has five subunits: alpha(3), beta(3), gamma(1), delta(1), epsilon(1). CF(0) has three main subunits: a(1), b(2) and c(9-12). The alpha and beta chains form an alternating ring which encloses part of the gamma chain. CF(1) is attached to CF(0) by a central stalk formed by the gamma and epsilon chains, while a peripheral stalk is formed by the delta and b chains.

It localises to the cell inner membrane. The catalysed reaction is ATP + H2O + 4 H(+)(in) = ADP + phosphate + 5 H(+)(out). Functionally, produces ATP from ADP in the presence of a proton gradient across the membrane. The catalytic sites are hosted primarily by the beta subunits. This Campylobacter jejuni subsp. jejuni serotype O:6 (strain 81116 / NCTC 11828) protein is ATP synthase subunit beta.